The following is an 828-amino-acid chain: Periplasmic nitrate reductase (828 aa).

A signal peptide (tat-type signal) is located at residues 1 to 32 (MNLSRRDFMKTNAAVAAAAVAGLAIPVKNVEA). The 57-residue stretch at 38–94 (IKWDKAPCRFCGTGCSVLVGTQNGRVVASQGDPDADVNRGLNCIKGYFLPKIMYGKD) folds into the 4Fe-4S Mo/W bis-MGD-type domain. The [4Fe-4S] cluster site is built by Cys45, Cys48, Cys52, and Cys80. Mo-bis(molybdopterin guanine dinucleotide) is bound by residues Lys82, Gln149, Asn174, Cys178, 211–218 (WGSNMAEM), 242–246 (STFEH), 261–263 (QSD), Met372, Gln376, Asn482, 508–509 (SD), Lys531, Asp558, and 718–727 (TGRVLEHWHT). Substrate is bound at residue Phe794. Mo-bis(molybdopterin guanine dinucleotide) is bound by residues Asn802 and Lys819.

The protein belongs to the prokaryotic molybdopterin-containing oxidoreductase family. NasA/NapA/NarB subfamily. As to quaternary structure, component of the periplasmic nitrate reductase NapAB complex composed of NapA and NapB. Requires [4Fe-4S] cluster as cofactor. Mo-bis(molybdopterin guanine dinucleotide) serves as cofactor. Post-translationally, predicted to be exported by the Tat system. The position of the signal peptide cleavage has not been experimentally proven.

It is found in the periplasm. It carries out the reaction 2 Fe(II)-[cytochrome] + nitrate + 2 H(+) = 2 Fe(III)-[cytochrome] + nitrite + H2O. Catalytic subunit of the periplasmic nitrate reductase complex NapAB. Receives electrons from NapB and catalyzes the reduction of nitrate to nitrite. The chain is Periplasmic nitrate reductase from Pasteurella multocida (strain Pm70).